We begin with the raw amino-acid sequence, 294 residues long: tRNA pseudouridine synthase B (294 aa).

D40 serves as the catalytic Nucleophile.

Belongs to the pseudouridine synthase TruB family. Type 1 subfamily.

The catalysed reaction is uridine(55) in tRNA = pseudouridine(55) in tRNA. Responsible for synthesis of pseudouridine from uracil-55 in the psi GC loop of transfer RNAs. This is tRNA pseudouridine synthase B from Synechococcus elongatus (strain ATCC 33912 / PCC 7942 / FACHB-805) (Anacystis nidulans R2).